The chain runs to 471 residues: Ribulose bisphosphate carboxylase large chain (471 aa).

Substrate is bound by residues Asn119 and Thr169. Lys171 functions as the Proton acceptor in the catalytic mechanism. Lys173 provides a ligand contact to substrate. Mg(2+) contacts are provided by Lys197, Asp199, and Glu200. The residue at position 197 (Lys197) is an N6-carboxylysine. The active-site Proton acceptor is the His290. Substrate-binding residues include Arg291, His323, and Ser375.

Belongs to the RuBisCO large chain family. Type I subfamily. As to quaternary structure, heterohexadecamer of 8 large chains and 8 small chains; disulfide-linked. The disulfide link is formed within the large subunit homodimers. Mg(2+) serves as cofactor. The disulfide bond which can form in the large chain dimeric partners within the hexadecamer appears to be associated with oxidative stress and protein turnover.

It localises to the carboxysome. The enzyme catalyses 2 (2R)-3-phosphoglycerate + 2 H(+) = D-ribulose 1,5-bisphosphate + CO2 + H2O. It carries out the reaction D-ribulose 1,5-bisphosphate + O2 = 2-phosphoglycolate + (2R)-3-phosphoglycerate + 2 H(+). In terms of biological role, ruBisCO catalyzes two reactions: the carboxylation of D-ribulose 1,5-bisphosphate, the primary event in carbon dioxide fixation, as well as the oxidative fragmentation of the pentose substrate in the photorespiration process. Both reactions occur simultaneously and in competition at the same active site. The polypeptide is Ribulose bisphosphate carboxylase large chain (Crocosphaera subtropica (strain ATCC 51142 / BH68) (Cyanothece sp. (strain ATCC 51142))).